A 437-amino-acid polypeptide reads, in one-letter code: Nuclear distribution protein PAC1 (437 aa).

The stretch at 64 to 94 (LSVIRLQRKVMDLETRLEAAEREASSTHKAN) forms a coiled coil. WD repeat units follow at residues 114-153 (LHKQPVNAVSFHPFHSTLASACEDGNIRIWDYELGEIETT), 156-217 (AHTR…ANVK), 221-260 (GHDHTISAVKFTASGNHVISASRDKTVRVWSVQSGYCVRT), 263-301 (GHTDWVKSCAALNEEFIFSAGIDHVTRVSEFVSGDGKMT), 304-356 (GHEH…LLIL), 358-397 (GHDNWVRGVVLHPAGRYLVSVSDDKTMRCWDLEQGGRCIR), and 401-437 (AHGHFVTCVAWAPNDVNGRVRCLVATGGVDGQVKVWQ). The disordered stretch occupies residues 165-186 (DFSQPDTGASRDKSHDKPRADV). A compositionally biased stretch (basic and acidic residues) spans 173 to 186 (ASRDKSHDKPRADV).

It belongs to the WD repeat LIS1/nudF family. Self-associates. Interacts with NDL1 and dynein.

The protein resides in the cytoplasm. It is found in the cytoskeleton. The protein localises to the spindle pole. Positively regulates the activity of the minus-end directed microtubule motor protein dynein. Plays a central role in positioning the mitotic spindle at the bud neck during cell division. Targets cytoplasmic dynein to microtubule plus ends, thereby promoting dynein-mediated microtubule sliding along the bud cortex and consequently the movement of the mitotic spindle to the bud neck. This chain is Nuclear distribution protein PAC1, found in Yarrowia lipolytica (strain CLIB 122 / E 150) (Yeast).